The chain runs to 216 residues: Protein fmp32, mitochondrial (216 aa).

The stretch at 111–133 forms a coiled coil; it reads RQEMVALHSQVEQLFSDVERLKT. A helical transmembrane segment spans residues 193–215; it reads TLQWVFGIVTGSGALLLAYVRLI.

The protein belongs to the CCDC90 family.

It is found in the mitochondrion. The protein localises to the membrane. This Schizosaccharomyces pombe (strain 972 / ATCC 24843) (Fission yeast) protein is Protein fmp32, mitochondrial (fmp32).